A 205-amino-acid polypeptide reads, in one-letter code: Large ribosomal subunit protein uL3 (205 aa).

Belongs to the universal ribosomal protein uL3 family. As to quaternary structure, part of the 50S ribosomal subunit. Forms a cluster with proteins L14 and L19.

One of the primary rRNA binding proteins, it binds directly near the 3'-end of the 23S rRNA, where it nucleates assembly of the 50S subunit. This is Large ribosomal subunit protein uL3 from Porphyromonas gingivalis (strain ATCC 33277 / DSM 20709 / CIP 103683 / JCM 12257 / NCTC 11834 / 2561).